A 42-amino-acid chain; its full sequence is Iota-conotoxin-like R11.1 (42 aa).

Disulfide bonds link Cys-5/Cys-19, Cys-12/Cys-22, Cys-18/Cys-27, and Cys-21/Cys-36.

It belongs to the conotoxin I1 superfamily. Expressed by the venom duct.

Its subcellular location is the secreted. Its function is as follows. Iota-conotoxins bind to voltage-gated sodium channels (Nav) and act as agonists by shifting the voltage-dependence of activation to more hyperpolarized levels. Produces general excitatory symptoms. The sequence is that of Iota-conotoxin-like R11.1 from Conus radiatus (Rayed cone).